The primary structure comprises 403 residues: Eukaryotic translation initiation factor 3 subunit H (403 aa).

An MPN domain is found at 57-206 (VRLDGLALTK…VKAYRLSPSF (150 aa)). Residues 99-122 (ALPNPGRSNSERDEEEDRSSRNAT) form a disordered region.

It belongs to the eIF-3 subunit H family. In terms of assembly, component of the eukaryotic translation initiation factor 3 (eIF-3) complex.

The protein resides in the cytoplasm. Functionally, component of the eukaryotic translation initiation factor 3 (eIF-3) complex, which is involved in protein synthesis of a specialized repertoire of mRNAs and, together with other initiation factors, stimulates binding of mRNA and methionyl-tRNAi to the 40S ribosome. The eIF-3 complex specifically targets and initiates translation of a subset of mRNAs involved in cell proliferation. In Mycosarcoma maydis (Corn smut fungus), this protein is Eukaryotic translation initiation factor 3 subunit H.